The following is a 450-amino-acid chain: Bifunctional protein GlmU (450 aa).

The interval 1 to 226 (MLAVAVLAAG…ADEVNGINNR (226 aa)) is pyrophosphorylase. UDP-N-acetyl-alpha-D-glucosamine-binding positions include 7 to 10 (LAAG), Lys-21, Gln-73, and 78 to 79 (GT). Asp-103 lines the Mg(2+) pocket. The UDP-N-acetyl-alpha-D-glucosamine site is built by Gly-140, Glu-155, Asn-170, and Asn-224. Asn-224 is a binding site for Mg(2+). The interval 227–247 (RQLAQCEALLQQRLRHHWMDE) is linker. The interval 248–450 (GVTFIDPESC…TKEGWAERKV (203 aa)) is N-acetyltransferase. UDP-N-acetyl-alpha-D-glucosamine contacts are provided by Arg-329 and Lys-347. The active-site Proton acceptor is His-359. 2 residues coordinate UDP-N-acetyl-alpha-D-glucosamine: Tyr-362 and Asn-373. Residues Ala-376, 382–383 (NY), Ala-419, and Arg-436 contribute to the acetyl-CoA site.

In the N-terminal section; belongs to the N-acetylglucosamine-1-phosphate uridyltransferase family. The protein in the C-terminal section; belongs to the transferase hexapeptide repeat family. As to quaternary structure, homotrimer. Mg(2+) is required as a cofactor.

Its subcellular location is the cytoplasm. It catalyses the reaction alpha-D-glucosamine 1-phosphate + acetyl-CoA = N-acetyl-alpha-D-glucosamine 1-phosphate + CoA + H(+). The catalysed reaction is N-acetyl-alpha-D-glucosamine 1-phosphate + UTP + H(+) = UDP-N-acetyl-alpha-D-glucosamine + diphosphate. The protein operates within nucleotide-sugar biosynthesis; UDP-N-acetyl-alpha-D-glucosamine biosynthesis; N-acetyl-alpha-D-glucosamine 1-phosphate from alpha-D-glucosamine 6-phosphate (route II): step 2/2. It functions in the pathway nucleotide-sugar biosynthesis; UDP-N-acetyl-alpha-D-glucosamine biosynthesis; UDP-N-acetyl-alpha-D-glucosamine from N-acetyl-alpha-D-glucosamine 1-phosphate: step 1/1. It participates in bacterial outer membrane biogenesis; LPS lipid A biosynthesis. Catalyzes the last two sequential reactions in the de novo biosynthetic pathway for UDP-N-acetylglucosamine (UDP-GlcNAc). The C-terminal domain catalyzes the transfer of acetyl group from acetyl coenzyme A to glucosamine-1-phosphate (GlcN-1-P) to produce N-acetylglucosamine-1-phosphate (GlcNAc-1-P), which is converted into UDP-GlcNAc by the transfer of uridine 5-monophosphate (from uridine 5-triphosphate), a reaction catalyzed by the N-terminal domain. The protein is Bifunctional protein GlmU of Synechococcus sp. (strain CC9605).